The following is a 746-amino-acid chain: MITQNSIPEVKEDFIGYALHERRIRLPQFQDLGPADLVTLTKYLPTSSNTNAINSTSRNGAAIIQSPAAVVADDSAASMATNGDASDTAVTTNYTNASIYSSSRNANDGAPMVAELHPLDKLKDEVGTFFYSMGVDTSGPTSIAIFLKEISEVISEKPQVWFGRKKTFNVARISFSTWNAFRRCDINVVVHIPGSIQNFIVDCNGESQNIEMCADYDLIWAETFVSGVVRSIMLMKENAEEGELQNLVETLILNPFTAGQIDDVPEMFIDLFPIVYHKGPLLGAPYYITNVTNTNNYLVETLVEIVKLTRNVSRAEIMLKNLATDNPEAIIILIKIFLVCDQELDAIKLTYDMLSQDKIINNTNNRMDYKSELLCLQAQFLIDKRQDYSLAQNIAQEAVNCSPSEFRPWYLLSKVYVKLNDIENALLILNSCPMSPLKEKYVLKRVAPLPSNNSLHLPLPIDVVLDEVTSLNPQDVQNEHRSADPMLVNLAASNLKSTFQLAYRLLTEIVQITGWENLLKYRSNIFVMEEEYQKSSSSLPKDVNKQEEQPLRAKRLCERWLDNLFMLLYEDLKMYTLWQTEQLYMDAQNNNHNKLTFEWELFGLCARRLGHFPEAAKAFQNGLSQRFSSRCARKLLEYCINERQRVKNFINSPNSHDMVPEIVSSRIRELDNSIIDLCVKICCWNHRWYTEFSISLLDCLSVVIQDMSLTKVSNEISSRYPETVLNLVQENLLNFFTTCTIGCYDA.

Positions 733-746 (LNFFTTCTIGCYDA) are CHS5-binding.

It belongs to the CHAPS family. Component of the CHS5/6 complex composed of the 4 CHAPS proteins BCH1, BCH2v, BUD7, and CHS6 as well as at least CHS5 and GTP-bound ARF1. The complex interacts with the cargo protein CHS3.

The protein resides in the golgi apparatus. It is found in the trans-Golgi network membrane. Functionally, member of the CHS5-ARF1P-binding proteins (CHAPS) which mediates export of specific cargo proteins, including chitin synthase CHS3. May be involved in positioning the proximal bud pole signal. The polypeptide is Bud site selection protein 7 (BUD7) (Saccharomyces cerevisiae (strain ATCC 204508 / S288c) (Baker's yeast)).